The chain runs to 89 residues: Small ribosomal subunit protein uS15 (89 aa).

The protein belongs to the universal ribosomal protein uS15 family. Part of the 30S ribosomal subunit. Forms a bridge to the 50S subunit in the 70S ribosome, contacting the 23S rRNA.

Its function is as follows. One of the primary rRNA binding proteins, it binds directly to 16S rRNA where it helps nucleate assembly of the platform of the 30S subunit by binding and bridging several RNA helices of the 16S rRNA. Forms an intersubunit bridge (bridge B4) with the 23S rRNA of the 50S subunit in the ribosome. The sequence is that of Small ribosomal subunit protein uS15 from Heliobacterium modesticaldum (strain ATCC 51547 / Ice1).